Here is a 269-residue protein sequence, read N- to C-terminus: Aquaporin-1 (269 aa).

Topologically, residues 1-11 are cytoplasmic; the sequence is MASEIKKKLFW. The helical transmembrane segment at 12-29 threads the bilayer; sequence RAVVAEFLAMTLFVFISI. Topologically, residues 30–46 are extracellular; sequence GSALGFNYPLERNQTLV. Residue Asn42 is glycosylated (N-linked (GlcNAc...) asparagine). Residues 47–65 form a helical membrane-spanning segment; the sequence is QDNVKVSLAFGLSIATLAQ. At 66-68 the chain is on the cytoplasmic side; the sequence is SVG. An intramembrane segment occupies 69–82; the sequence is HISGAHLNPAVTLG. The NPA 1 motif lies at 76–78; that stretch reads NPA. Over 83–90 the chain is Cytoplasmic; it reads LLLSCQIS. Residues 91-109 form a helical membrane-spanning segment; it reads ILRAVMYIIAQCVGAIVAS. Residues 110–133 are Extracellular-facing; that stretch reads AILSGITSSLLENSLGRNDLARGV. The helical transmembrane segment at 134 to 153 threads the bilayer; that stretch reads NSGQGLGIEIIGTLQLVLCV. Topologically, residues 154-163 are cytoplasmic; the sequence is LATTDRRRRD. Residues 164-181 traverse the membrane as a helical segment; sequence LGGSAPLAIGLSVALGHL. Topologically, residues 182–186 are extracellular; the sequence is LAIDY. An intramembrane segment occupies 187–199; sequence TGCGINPARSFGS. Positions 192-194 match the NPA 2 motif; the sequence is NPA. The Extracellular segment spans residues 200–206; the sequence is AVLTRNF. Asn205 carries an N-linked (GlcNAc...) asparagine glycan. A helical membrane pass occupies residues 207 to 224; sequence SNHWIFWVGPFIGSALAV. Residues 225–269 are Cytoplasmic-facing; it reads LIYDFILAPRSSDFTDRMKVWTSGQVEEYDLDADDINSRVEMKPK. The residue at position 247 (Ser247) is a Phosphoserine. Residue Tyr253 is modified to Phosphotyrosine. Ser262 carries the post-translational modification Phosphoserine.

It belongs to the MIP/aquaporin (TC 1.A.8) family. As to quaternary structure, homotetramer; each monomer provides an independent water pore. Component of the ankyrin-1 complex in the erythrocyte, composed of ANK1, RHCE, RHAG, SLC4A1, EPB42, GYPA, GYPB and AQP1. Interacts with EPHB2; involved in endolymph production in the inner ear. Identified in a complex with STOM. Interacts (via the N-terminal) with ANK1 (via ANK 1-5 repeats). Interacts (via the C-terminal) with EPB42. As to expression, erythrocytes and renal tubules.

The protein resides in the cell membrane. It catalyses the reaction H2O(in) = H2O(out). It carries out the reaction nitric oxide(out) = nitric oxide(in). The catalysed reaction is CO2(out) = CO2(in). The enzyme catalyses glycerol(in) = glycerol(out). It catalyses the reaction H2O2(out) = H2O2(in). It carries out the reaction K(+)(in) = K(+)(out). The catalysed reaction is Na(+)(in) = Na(+)(out). Functionally, forms a water channel that facilitates the transport of water across cell membranes, playing a crucial role in water homeostasis in various tissues. Could also be permeable to small solutes including hydrogen peroxide, glycerol and gases such as amonnia (NH3), nitric oxide (NO) and carbon dioxide (CO2). Recruited to the ankyrin-1 complex, a multiprotein complex of the erythrocyte membrane, it could be part of a CO2 metabolon, linking facilitated diffusion of CO2 across the membrane, anion exchange of Cl(-)/HCO3(-) and interconversion of dissolved CO2 and carbonic acid in the cytosol. In vitro, it shows non-selective gated cation channel activity and may be permeable to cations like K(+) and Na(+) in vivo. The polypeptide is Aquaporin-1 (Rattus norvegicus (Rat)).